The primary structure comprises 220 residues: Small ribosomal subunit protein uS5 (220 aa).

A disordered region spans residues 1 to 39 (MAEQPAGQAGTTDNRDARGDREGRRRDSGRGSRERDGEK). The span at 13 to 39 (DNRDARGDREGRRRDSGRGSRERDGEK) shows a compositional bias: basic and acidic residues. The 64-residue stretch at 42-105 (YLERVVAINR…EEARKSFFRV (64 aa)) folds into the S5 DRBM domain.

Belongs to the universal ribosomal protein uS5 family. Part of the 30S ribosomal subunit. Contacts proteins S4 and S8.

Functionally, with S4 and S12 plays an important role in translational accuracy. In terms of biological role, located at the back of the 30S subunit body where it stabilizes the conformation of the head with respect to the body. This is Small ribosomal subunit protein uS5 from Mycobacterium bovis (strain ATCC BAA-935 / AF2122/97).